Here is a 2617-residue protein sequence, read N- to C-terminus: Non-reducing polyketide synthase epaA (2617 aa).

Positions Pro95–Gln231 are N-terminal acylcarrier protein transacylase domain (SAT). Residue Cys132 is the Nucleophile; for transacylase activity of the active site. Catalysis depends on His250, which acts as the Proton donor/acceptor; for transacylase activity. In terms of domain architecture, Ketosynthase family 3 (KS3) spans Pro372–Gln790. Residues Cys539, His674, and His713 each act as for beta-ketoacyl synthase activity in the active site. The segment at Phe902 to Gly1193 is malonyl-CoA:ACP transacylase (MAT) domain. The interval Pro1282–Asp1413 is N-terminal hotdog fold. In terms of domain architecture, PKS/mFAS DH spans Pro1282–Ser1591. Residues Leu1310–Ser1589 form a product template (PT) domain region. His1314 serves as the catalytic Proton acceptor; for dehydratase activity. Residues Ala1443–Ser1591 form a C-terminal hotdog fold region. Asp1499 acts as the Proton donor; for dehydratase activity in catalysis. A disordered region spans residues Thr1600–Ala1651. Low complexity predominate over residues Ala1602–Arg1619. Residues Gln1653–Val1727 enclose the Carrier domain. Ser1687 carries the post-translational modification O-(pantetheine 4'-phosphoryl)serine. The segment at Gly1728–Thr1799 is disordered. Residues Leu1750–Asp1766 show a composition bias toward low complexity. A compositionally biased stretch (polar residues) spans Leu1769–Thr1785. The methyltransferase domain stretch occupies residues Asp1970–Asp2158. The tract at residues Ile2240–Ala2485 is NADPH-binding (R) domain.

Pantetheine 4'-phosphate serves as cofactor.

It participates in secondary metabolite biosynthesis. Its function is as follows. Non-reducing polyketide synthase; part of the gene cluster that mediates the biosynthesis of nigerpyrone and its derivatives carbonarone A and pestalamide A. The biosynthesis pathway begins with the polyketide assembly by epaA to form phenylacetyl triketide precursor from successive condensation of two malonyl-CoA, presumably with one phenylacetyl-CoA starter unit produced by the phenylacetyl-CoA ligase epaB. For the nigerpyrone biosynthesis, the reactive polyketide chain is released as an aldehyde through the R-domain. A nonenzymatic cyclization and dehydration may create nigerpyrone. For the biosynthesis of carbonarone A and pestalamide A, an extra methyl group is added through the C-methyltransferase domain. Several further steps involving the dehydrogenase orf1, the cytochrome P450 monooxygenase orf2 and the FAD-dependent monooxygenase orf3 are required to form a carbonarone A precursor which is converted to carbonarone A via cyclization. The O-acetyltransferase epaC could catalyze the transfer of 2-methylsuccinyl-CoA, a common intermediate in the ethylmalonyl-CoA pathway, to generate the final product pestalamide A. The chain is Non-reducing polyketide synthase epaA from Aspergillus niger (strain ATCC MYA-4892 / CBS 513.88 / FGSC A1513).